The primary structure comprises 193 residues: Bcl-2-like protein 2 (193 aa).

An N-acetylalanine modification is found at Ala2. The short motif at 9 to 29 is the BH4 element; that stretch reads DTRALVADFVGYKLRQKGYVC. Residues 85–104 carry the BH1 motif; the sequence is ELFQGGPNWGRLVAFFVFGA. The short motif at 136–151 is the BH2 element; it reads DWIHSSGGWAEFTALY.

The protein belongs to the Bcl-2 family. As to quaternary structure, interacts with HIF3A isoform 2 (via C-terminus domain). Interacts with BOP. Expressed in almost all myeloid cell lines and in a wide range of tissues, with highest levels in brain, colon, and salivary gland.

The protein localises to the mitochondrion membrane. In terms of biological role, promotes cell survival. Blocks dexamethasone-induced apoptosis. Mediates survival of postmitotic Sertoli cells by suppressing death-promoting activity of BAX. The chain is Bcl-2-like protein 2 (Bcl2l2) from Mus musculus (Mouse).